A 94-amino-acid polypeptide reads, in one-letter code: Non-specific lipid-transfer protein 1 (94 aa).

4 cysteine pairs are disulfide-bonded: C4-C53, C14-C30, C31-C76, and C51-C90.

Its function is as follows. Plant non-specific lipid-transfer proteins transfer phospholipids as well as galactolipids across membranes. May play a role in wax or cutin deposition in the cell walls of expanding epidermal cells and certain secretory tissues. The polypeptide is Non-specific lipid-transfer protein 1 (Amaranthus hypochondriacus (Prince-of-Wales feather)).